The chain runs to 522 residues: Maturase K (522 aa).

It belongs to the intron maturase 2 family. MatK subfamily.

The protein resides in the plastid. The protein localises to the chloroplast. In terms of biological role, usually encoded in the trnK tRNA gene intron. Probably assists in splicing its own and other chloroplast group II introns. This Iris danfordiae (Danford iris) protein is Maturase K.